A 239-amino-acid chain; its full sequence is Proteasome activator complex subunit 2 (239 aa).

Ala-2 is subject to N-acetylalanine. The residue at position 10 (Ser-10) is a Phosphoserine. The tract at residues 65-87 (DIPIPDPPPKDDEMETDKQEKKE) is disordered. Positions 72 to 87 (PPKDDEMETDKQEKKE) are enriched in basic and acidic residues.

It belongs to the PA28 family. In terms of assembly, heterodimer of PSME1 and PSME2, which forms a hexameric ring.

Its function is as follows. Implicated in immunoproteasome assembly and required for efficient antigen processing. The PA28 activator complex enhances the generation of class I binding peptides by altering the cleavage pattern of the proteasome. This chain is Proteasome activator complex subunit 2 (Psme2), found in Mus musculus (Mouse).